The primary structure comprises 283 residues: Phosphatidylserine decarboxylase proenzyme (283 aa).

Catalysis depends on charge relay system; for autoendoproteolytic cleavage activity residues aspartate 90, histidine 143, and serine 248. The active-site Schiff-base intermediate with substrate; via pyruvic acid; for decarboxylase activity is the serine 248. Serine 248 bears the Pyruvic acid (Ser); by autocatalysis mark.

The protein belongs to the phosphatidylserine decarboxylase family. PSD-B subfamily. Prokaryotic type I sub-subfamily. Heterodimer of a large membrane-associated beta subunit and a small pyruvoyl-containing alpha subunit. It depends on pyruvate as a cofactor. Post-translationally, is synthesized initially as an inactive proenzyme. Formation of the active enzyme involves a self-maturation process in which the active site pyruvoyl group is generated from an internal serine residue via an autocatalytic post-translational modification. Two non-identical subunits are generated from the proenzyme in this reaction, and the pyruvate is formed at the N-terminus of the alpha chain, which is derived from the carboxyl end of the proenzyme. The autoendoproteolytic cleavage occurs by a canonical serine protease mechanism, in which the side chain hydroxyl group of the serine supplies its oxygen atom to form the C-terminus of the beta chain, while the remainder of the serine residue undergoes an oxidative deamination to produce ammonia and the pyruvoyl prosthetic group on the alpha chain. During this reaction, the Ser that is part of the protease active site of the proenzyme becomes the pyruvoyl prosthetic group, which constitutes an essential element of the active site of the mature decarboxylase.

The protein resides in the cell membrane. The enzyme catalyses a 1,2-diacyl-sn-glycero-3-phospho-L-serine + H(+) = a 1,2-diacyl-sn-glycero-3-phosphoethanolamine + CO2. The protein operates within phospholipid metabolism; phosphatidylethanolamine biosynthesis; phosphatidylethanolamine from CDP-diacylglycerol: step 2/2. In terms of biological role, catalyzes the formation of phosphatidylethanolamine (PtdEtn) from phosphatidylserine (PtdSer). The polypeptide is Phosphatidylserine decarboxylase proenzyme (Francisella tularensis subsp. novicida (strain U112)).